The primary structure comprises 639 residues: MEKRKSIFFANDSEDNTSSGDLSSFTKRGTITPGKIANAREGELSQMIDVESEQKYQEIIELLVTGGYFRARISGLSPFDKVVGGMAWSITASNVDVDADLFFQENSNIKQKVSLSEELIKALNRMKCPFPLQAQHITLLNYITLFPIIRWLITKVIETREETGDLLRMYSISMFSKDYIAPIDEDMKKSLNESCDFIESVEKRYKPTRKFKRANNTKSTPTQTLLEYGKLHRISRLPTNINENKEAAQKLESQLSGKDGSGKDTTEAEREEEEKRIKQMMKGMKGVEGDALSKVSGGVLKSFLPSEEITNLSERYGDMSDLGGAEGAKMMAEKLHRQKITNLEKLIQQKNQELEQIINAHSERQTELEQLQLLVGKKQAFNERIIRETEKLDALETPENTKALQALRSLVLLNETLIAQEELFKQSCKRQMVEYKQKIEQLLSQDASTQEDLQDSDRQQQIQQAFDSDIGKLKKLKLLLNKKNRDISLIQRYLDELPSRAELLQYQRQFVELSEQSSSKLTETRQYYTTYNTFEDKKTLLENELSILNSIQSKYSIAMSSTNNKELFIKSMDQIIDGIQQVLDKSENKWNVEKVRHDTLSDQYMTLLDQERNYYKLTKDFEEECRKNELLIKKLNELQ.

A disordered region spans residues 250 to 275 (KLESQLSGKDGSGKDTTEAEREEEEK). Positions 260–275 (GSGKDTTEAEREEEEK) are enriched in basic and acidic residues. The stretch at 332–492 (AEKLHRQKIT…KNRDISLIQR (161 aa)) forms a coiled coil.

The protein belongs to the CCDC93 family.

The protein is Coiled-coil domain-containing protein 93 homolog of Dictyostelium discoideum (Social amoeba).